The following is a 295-amino-acid chain: Deleted in azoospermia-like (295 aa).

Residues M1–N10 are compositionally biased toward polar residues. Residues M1–A25 are disordered. Low complexity predominate over residues S11–A25. An RRM domain is found at N40 to R115. The homodimerization stretch occupies residues K80–N132. The 24-residue stretch at A167–Q190 folds into the DAZ domain. Residue Y276 is modified to Phosphotyrosine.

It belongs to the RRM DAZ family. In terms of assembly, homodimer and heterodimer. Forms a heterodimer with DAZ. Interacts with BOLL, DAZAP1 and DAZAP2. Interacts with PUM2 Multiple DAZL RRMs can bind to a single RNA containing multiple GUU triplets. Testis specific.

It is found in the cytoplasm. Its subcellular location is the nucleus. RNA-binding protein, which is essential for gametogenesis in both males and females. Plays a central role during spermatogenesis. Acts by binding to the 3'-UTR of mRNA, specifically recognizing GUU triplets, and thereby regulating the translation of key transcripts. The sequence is that of Deleted in azoospermia-like (DAZL) from Macaca fascicularis (Crab-eating macaque).